Here is a 71-residue protein sequence, read N- to C-terminus: Exodeoxyribonuclease 7 small subunit (71 aa).

It belongs to the XseB family. In terms of assembly, heterooligomer composed of large and small subunits.

The protein localises to the cytoplasm. The catalysed reaction is Exonucleolytic cleavage in either 5'- to 3'- or 3'- to 5'-direction to yield nucleoside 5'-phosphates.. Functionally, bidirectionally degrades single-stranded DNA into large acid-insoluble oligonucleotides, which are then degraded further into small acid-soluble oligonucleotides. This Streptococcus pyogenes serotype M1 protein is Exodeoxyribonuclease 7 small subunit.